We begin with the raw amino-acid sequence, 348 residues long: Methylthioribose-1-phosphate isomerase (348 aa).

Substrate contacts are provided by residues 47–49, Arg90, and Gln196; that span reads RGA. Asp237 functions as the Proton donor in the catalytic mechanism. 247–248 is a binding site for substrate; that stretch reads NK.

Belongs to the eIF-2B alpha/beta/delta subunits family. MtnA subfamily.

It carries out the reaction 5-(methylsulfanyl)-alpha-D-ribose 1-phosphate = 5-(methylsulfanyl)-D-ribulose 1-phosphate. It participates in amino-acid biosynthesis; L-methionine biosynthesis via salvage pathway; L-methionine from S-methyl-5-thio-alpha-D-ribose 1-phosphate: step 1/6. Its function is as follows. Catalyzes the interconversion of methylthioribose-1-phosphate (MTR-1-P) into methylthioribulose-1-phosphate (MTRu-1-P). The chain is Methylthioribose-1-phosphate isomerase from Synechococcus sp. (strain ATCC 27144 / PCC 6301 / SAUG 1402/1) (Anacystis nidulans).